Consider the following 231-residue polypeptide: Probable amino-acid ABC transporter permease protein y4tG (231 aa).

6 helical membrane passes run 9–29 (TGNGELAFAISILPMLLMGLI), 32–52 (LQAAFLGFFVACVLGMVFAVL), 64–84 (AAVLIEFIRDTPLIAQLFFLY), 86–106 (VLPEYGIIFPAFLTGALALGI), 161–181 (YLVSIMKDVPVLSVVTIVEML), and 196–216 (VPLSMVGGIYLILTIVASALV). Residues 28-217 (LITTLQAAFL…LTIVASALVR (190 aa)) enclose the ABC transmembrane type-1 domain.

The protein belongs to the binding-protein-dependent transport system permease family. HisMQ subfamily.

It is found in the cell inner membrane. Functionally, probably part of the binding-protein-dependent transport system y4tEFGH for an amino acid. Probably responsible for the translocation of the substrate across the membrane. The chain is Probable amino-acid ABC transporter permease protein y4tG from Sinorhizobium fredii (strain NBRC 101917 / NGR234).